The following is a 303-amino-acid chain: Methionyl-tRNA formyltransferase (303 aa).

108–111 (SDLP) provides a ligand contact to (6S)-5,6,7,8-tetrahydrofolate.

The protein belongs to the Fmt family.

The enzyme catalyses L-methionyl-tRNA(fMet) + (6R)-10-formyltetrahydrofolate = N-formyl-L-methionyl-tRNA(fMet) + (6S)-5,6,7,8-tetrahydrofolate + H(+). Functionally, attaches a formyl group to the free amino group of methionyl-tRNA(fMet). The formyl group appears to play a dual role in the initiator identity of N-formylmethionyl-tRNA by promoting its recognition by IF2 and preventing the misappropriation of this tRNA by the elongation apparatus. The polypeptide is Methionyl-tRNA formyltransferase (Rickettsia felis (strain ATCC VR-1525 / URRWXCal2) (Rickettsia azadi)).